The sequence spans 190 residues: Threonylcarbamoyl-AMP synthase (190 aa).

One can recognise a YrdC-like domain in the interval 8–190 (RFRIRQCAAR…DAESGAVIRA (183 aa)).

This sequence belongs to the SUA5 family. TsaC subfamily.

The protein resides in the cytoplasm. It carries out the reaction L-threonine + hydrogencarbonate + ATP = L-threonylcarbamoyladenylate + diphosphate + H2O. Its function is as follows. Required for the formation of a threonylcarbamoyl group on adenosine at position 37 (t(6)A37) in tRNAs that read codons beginning with adenine. Catalyzes the conversion of L-threonine, HCO(3)(-)/CO(2) and ATP to give threonylcarbamoyl-AMP (TC-AMP) as the acyladenylate intermediate, with the release of diphosphate. The protein is Threonylcarbamoyl-AMP synthase of Alkalilimnicola ehrlichii (strain ATCC BAA-1101 / DSM 17681 / MLHE-1).